The following is a 318-amino-acid chain: 4-hydroxy-3-methylbut-2-enyl diphosphate reductase (318 aa).

Cysteine 12 contributes to the [4Fe-4S] cluster binding site. Residues histidine 41 and histidine 74 each contribute to the (2E)-4-hydroxy-3-methylbut-2-enyl diphosphate site. Positions 41 and 74 each coordinate dimethylallyl diphosphate. Isopentenyl diphosphate is bound by residues histidine 41 and histidine 74. Cysteine 96 provides a ligand contact to [4Fe-4S] cluster. Histidine 124 is a binding site for (2E)-4-hydroxy-3-methylbut-2-enyl diphosphate. Histidine 124 is a binding site for dimethylallyl diphosphate. Histidine 124 contributes to the isopentenyl diphosphate binding site. The Proton donor role is filled by glutamate 126. Threonine 167 provides a ligand contact to (2E)-4-hydroxy-3-methylbut-2-enyl diphosphate. Cysteine 197 is a [4Fe-4S] cluster binding site. (2E)-4-hydroxy-3-methylbut-2-enyl diphosphate is bound by residues serine 225, serine 226, asparagine 227, and serine 269. Serine 225, serine 226, asparagine 227, and serine 269 together coordinate dimethylallyl diphosphate. Positions 225, 226, 227, and 269 each coordinate isopentenyl diphosphate.

The protein belongs to the IspH family. Requires [4Fe-4S] cluster as cofactor.

It catalyses the reaction isopentenyl diphosphate + 2 oxidized [2Fe-2S]-[ferredoxin] + H2O = (2E)-4-hydroxy-3-methylbut-2-enyl diphosphate + 2 reduced [2Fe-2S]-[ferredoxin] + 2 H(+). The enzyme catalyses dimethylallyl diphosphate + 2 oxidized [2Fe-2S]-[ferredoxin] + H2O = (2E)-4-hydroxy-3-methylbut-2-enyl diphosphate + 2 reduced [2Fe-2S]-[ferredoxin] + 2 H(+). It participates in isoprenoid biosynthesis; dimethylallyl diphosphate biosynthesis; dimethylallyl diphosphate from (2E)-4-hydroxy-3-methylbutenyl diphosphate: step 1/1. The protein operates within isoprenoid biosynthesis; isopentenyl diphosphate biosynthesis via DXP pathway; isopentenyl diphosphate from 1-deoxy-D-xylulose 5-phosphate: step 6/6. Catalyzes the conversion of 1-hydroxy-2-methyl-2-(E)-butenyl 4-diphosphate (HMBPP) into a mixture of isopentenyl diphosphate (IPP) and dimethylallyl diphosphate (DMAPP). Acts in the terminal step of the DOXP/MEP pathway for isoprenoid precursor biosynthesis. This is 4-hydroxy-3-methylbut-2-enyl diphosphate reductase from Francisella tularensis subsp. mediasiatica (strain FSC147).